The chain runs to 318 residues: MAPKQLRIGTRASQLALWQANWVKGELEKRYPGMAVELVKIKTMGDKILDVPLAQVGGKGLFVKEIEEAMLRGEIDIAVHSMKDVPTEFPEGLGLYCITEREDPRDAVISRGVKFADLPQGARIGTSALRRQAQILKVRPDLQMVVIRGNVETRIRKLTDENLDAVILAAAGLNRLGFADQVSEYLPVELSLPAIGQGALGIECRLDDETIKDTIAFFNHPDTAHAVRAERALLWRCEGGCQVPIAAHGQVSGDTLTLTGFVASVDGTRSVKDTISGPVTECEKLGIALAEKLLADGAHEILAEVYQREVAREKEIPV.

Cys241 carries the S-(dipyrrolylmethanemethyl)cysteine modification.

The protein belongs to the HMBS family. Monomer. Dipyrromethane is required as a cofactor.

The catalysed reaction is 4 porphobilinogen + H2O = hydroxymethylbilane + 4 NH4(+). Its pathway is porphyrin-containing compound metabolism; protoporphyrin-IX biosynthesis; coproporphyrinogen-III from 5-aminolevulinate: step 2/4. Functionally, tetrapolymerization of the monopyrrole PBG into the hydroxymethylbilane pre-uroporphyrinogen in several discrete steps. This is Porphobilinogen deaminase from Geobacter metallireducens (strain ATCC 53774 / DSM 7210 / GS-15).